The following is a 126-amino-acid chain: UPF0235 protein C15orf40 homolog (126 aa).

The disordered stretch occupies residues 1 to 33; it reads MPKKAGATSKGKNQTKEPETPPPPTGPVATDSK. Residue Ser89 is modified to Phosphoserine.

The protein belongs to the UPF0235 family.

The polypeptide is UPF0235 protein C15orf40 homolog (Rattus norvegicus (Rat)).